The following is a 215-amino-acid chain: High mobility group protein B1 (215 aa).

A DNA-binding region (HMG box 1) is located at residues 9–79 (PRGKMSSYAF…RYEKEMKNYV (71 aa)). Cys-23 bears the Cysteine sulfonic acid (-SO3H); alternate mark. Cys-23 and Cys-45 are disulfide-bonded. The interval 27 to 43 (HKKKHPDASVNFSEFSK) is NLS 1. The short motif at 27–43 (HKKKHPDASVNFSEFSK) is the Nuclear localization signal (NLS) 1 element. Cys-45 carries the cysteine sulfonic acid (-SO3H); alternate modification. The segment at 75–95 (MKNYVPPKGETKKKFKDPNAP) is disordered. Residues 83-94 (GETKKKFKDPNA) show a composition bias toward basic and acidic residues. A DNA-binding region (HMG box 2) is located at residues 95 to 163 (PKRPPSAFFL…KYEKDIAAYR (69 aa)). Cys-106 is subject to Cysteine sulfonic acid (-SO3H). Residues 166-179 (GKVDAGKKVVAKAE) are compositionally biased toward basic and acidic residues. Residues 166 to 215 (GKVDAGKKVVAKAEKSKKKKEEEEDEDEDEEDEEDEEEEEEEEEDDDDDE) are disordered. Residues 178–184 (AEKSKKK) are NLS 2. The Nuclear localization signal (NLS) 2 signature appears at 178–184 (AEKSKKK). Over residues 187 to 215 (EEEDEDEDEEDEEDEEEEEEEEEDDDDDE) the composition is skewed to acidic residues. The tract at residues 196–210 (EDEEDEEEEEEEEED) is involved in intramolecular interaction with K-3. Residues 211–215 (DDDDE) are involved in interaction with histone H3.

It belongs to the HMGB family. Post-translationally, reduction/oxidation of cysteine residues Cys-23, Cys-45 and Cys-106 and a possible intramolecular disulfide bond involving Cys-23 and Cys-45 give rise to different redox forms with specific functional activities: 1- fully reduced HMGB1 (HMGB1C23hC45hC106h), 2- disulfide HMGB1 (HMGB1C23-C45C106h) and 3- sulfonyl HMGB1 (HMGB1C23soC45soC106so).

Its subcellular location is the nucleus. The protein localises to the chromosome. It localises to the cytoplasm. It is found in the secreted. Multifunctional redox sensitive protein with various roles in different cellular compartments. Nuclear functions are attributed to fully reduced HGMB1. Associates with chromatin and binds DNA with a preference to non-canonical DNA structures such as single-stranded DNA, DNA-containing cruciforms or bent structures, supercoiled DNA and ZDNA. Can bent DNA and enhance DNA flexibility by looping thus providing a mechanism to promote activities on various gene promoters. Can restructure the canonical nucleosome. Proposed to be an universal biosensor for nucleic acids. May promote inflammatory response to sterile and infectious signals and may be involved in the coordination and integration of innate and adaptive immune responses. In the cytoplasm may function as sensor and/or chaperone for immunogenic nucleic acids, and mediate autophagy. May act as danger associated molecular pattern (DAMP) molecule that amplifies immune responses during tissue injury. In Gallus gallus (Chicken), this protein is High mobility group protein B1 (HMGB1).